The sequence spans 967 residues: Sarcosine oxidase subunit alpha (967 aa).

The NAD(+) site is built by alanine 141, aspartate 160, glutamate 161, arginine 162, serine 168, valine 207, alanine 420, and threonine 427. (6R)-5,10-methylene-5,6,7,8-tetrahydrofolate is bound by residues threonine 694 and glutamate 786.

It belongs to the GcvT family. Heterotetramer composed of subunits alpha (SoxA), beta (SoxB), gamma (SoxG) and delta (SoxD). NAD(+) serves as cofactor.

The protein localises to the cytoplasm. The catalysed reaction is sarcosine + (6S)-5,6,7,8-tetrahydrofolate + O2 = (6R)-5,10-methylene-5,6,7,8-tetrahydrofolate + glycine + H2O2. It carries out the reaction sarcosine + O2 + H2O = formaldehyde + glycine + H2O2. In the presence of tetrahydrofolate, catalyzes the oxidative demethylation of sarcosine to yield glycine, 5,10-methylenetetrahydrofolate and hydrogen peroxide. In the absence of tetrahydrofolate, catalyzes the oxidative demethylation of sarcosine to yield glycine, formaldehyde and hydrogen peroxide. In Corynebacterium sp. (strain P-1), this protein is Sarcosine oxidase subunit alpha.